A 236-amino-acid polypeptide reads, in one-letter code: MTEELYLKDSYIKEFEGRVVRIEGNYVILDKTAFYPGGGGLDNDTGFLVNEKGERISVTEVKRGENGEILHKIDQNGSLNVNEKVIGTIDWDRRYRMMRLHTASHIVAALAYRKFGALITGGHISPEQAKDDFNVENKDTLIELINEANEIIKKDIELKIYFLPREEALMIPAIVKLAGRNPPQIPIWRIVEIPGIDIQADGGPHVKNTKEIGEIVLLKVENKGKGRKRVYYTVKP.

Residues His101, His105, and His205 each coordinate Zn(2+).

This sequence belongs to the class-II aminoacyl-tRNA synthetase family. Editing domain AlaX-M subfamily. It depends on Zn(2+) as a cofactor.

It localises to the cytoplasm. Functions in trans to edit the amino acid moiety from incorrectly charged Ser-tRNA(Ala). This is Alanyl-tRNA editing protein AlaX-M (alaXM) from Saccharolobus solfataricus (strain ATCC 35092 / DSM 1617 / JCM 11322 / P2) (Sulfolobus solfataricus).